The primary structure comprises 246 residues: UPF0309 protein OB3413 (246 aa).

The SIS domain maps to Met33–Glu212.

This sequence belongs to the UPF0309 family.

This chain is UPF0309 protein OB3413, found in Oceanobacillus iheyensis (strain DSM 14371 / CIP 107618 / JCM 11309 / KCTC 3954 / HTE831).